The following is a 160-amino-acid chain: Phosphopantetheine adenylyltransferase (160 aa).

Thr10 contacts substrate. ATP-binding positions include 10-11 (TF) and His18. Positions 42, 74, and 88 each coordinate substrate. Residues 89 to 91 (GVR), Glu99, and 124 to 130 (WSYISST) each bind ATP.

Belongs to the bacterial CoaD family. In terms of assembly, homohexamer. It depends on Mg(2+) as a cofactor.

It localises to the cytoplasm. It catalyses the reaction (R)-4'-phosphopantetheine + ATP + H(+) = 3'-dephospho-CoA + diphosphate. Its pathway is cofactor biosynthesis; coenzyme A biosynthesis; CoA from (R)-pantothenate: step 4/5. Functionally, reversibly transfers an adenylyl group from ATP to 4'-phosphopantetheine, yielding dephospho-CoA (dPCoA) and pyrophosphate. This is Phosphopantetheine adenylyltransferase from Sodalis glossinidius (strain morsitans).